Reading from the N-terminus, the 90-residue chain is Probable Fe(2+)-trafficking protein (90 aa).

Belongs to the Fe(2+)-trafficking protein family.

Its function is as follows. Could be a mediator in iron transactions between iron acquisition and iron-requiring processes, such as synthesis and/or repair of Fe-S clusters in biosynthetic enzymes. The polypeptide is Probable Fe(2+)-trafficking protein (Vibrio vulnificus (strain CMCP6)).